The following is a 127-amino-acid chain: Small ribosomal subunit protein bS6 (127 aa).

The tract at residues 102 to 127 is disordered; the sequence is IMQGAEKGKSSRKEKVDAEAEASEEA. Positions 107–119 are enriched in basic and acidic residues; it reads EKGKSSRKEKVDA.

It belongs to the bacterial ribosomal protein bS6 family.

Its function is as follows. Binds together with bS18 to 16S ribosomal RNA. The protein is Small ribosomal subunit protein bS6 of Coxiella burnetii (strain CbuK_Q154) (Coxiella burnetii (strain Q154)).